Consider the following 229-residue polypeptide: Ribonuclease 3 (229 aa).

Positions L5 to G127 constitute an RNase III domain. E40 lines the Mg(2+) pocket. Residue D44 is part of the active site. Residues D113 and E116 each contribute to the Mg(2+) site. E116 is an active-site residue. The DRBM domain occupies D154–V224.

This sequence belongs to the ribonuclease III family. In terms of assembly, homodimer. Mg(2+) serves as cofactor.

It localises to the cytoplasm. It carries out the reaction Endonucleolytic cleavage to 5'-phosphomonoester.. Its function is as follows. Digests double-stranded RNA. Involved in the processing of primary rRNA transcript to yield the immediate precursors to the large and small rRNAs (23S and 16S). Processes some mRNAs, and tRNAs when they are encoded in the rRNA operon. Processes pre-crRNA and tracrRNA of type II CRISPR loci if present in the organism. This is Ribonuclease 3 from Pseudomonas fluorescens (strain Pf0-1).